The sequence spans 213 residues: Regulatory protein RecX (213 aa).

The protein belongs to the RecX family.

Its subcellular location is the cytoplasm. Functionally, modulates RecA activity. This chain is Regulatory protein RecX, found in Clostridium beijerinckii (strain ATCC 51743 / NCIMB 8052) (Clostridium acetobutylicum).